We begin with the raw amino-acid sequence, 1734 residues long: MRLLWGLAWVFSFCASSLQKPRLLLFSPSVVNLGTPLSVGVQLLDAPPGQEVKGSVFLRNPKGGSCSPKKDFKLSSGDDFVLLSLEVPLEDVRSCGLFDLRRAPYIQLVAQSPWLRNTAFKATETQGVNLLYSSRRGHIFVQTDQPIYNPGQRVRYRVFALDQKMRPSTDFLTITVENSHGLRVLKKEIFTSTSILQDTFTIPDISEPGTWKISARFSDGLESNRSTHFEVKKYVLPNFEVKITPWKPYILMVPSNSDEIQLDIQARYIYGKPVQGVAYTRFALMDEQGKRTFLRGLETQAKLVEGRTHISISKDQFQAALDKINIGVRDLEGLRLYAATAVIESPGGEMEEAELTSWRFVSSAFSLDLSRTKRHLVPGAHFLLQALVREISGSEASNVIVKVSPTLVSGSDSQVLNVQQSTNRIGQVSISFPIPPTVTGLRLLVSAGSLYPMIARLTVQSPPSRGTGFLSIEPLDPRSPRVGDTFILNLQAVGIPAPTFSHYYYMIISRGQIMAMSREARRTVTSVSVLVDHQLAPSFYFVAYFYHQGHPVANSLLINIQPRDCEGKLQLKVVGAKEYHNGDMMKLRIQTDSKALVALGAVDTALYAVGGWSHKPLDMSKVFEVINSYNVGCGPGGGDDAPQVFQDAGLAFSDGDRLTQTREDLSCPKEKKSRQKRNVNFLKALSEKLGQYSSPDAKRCCQDGMTKLPMKRTCEQRAARVPQQACREPFLSCCKFAEDLRRNQTRSQAPLARKVRDMVNLIEEDDILVRTSFPENWLWRVEPVDSSKLLTVRLPDSMTTWEIHGVSLSKSKGLCVAKPTRVRVFRKFHLHLRLPISVRRFEQLELRPVLYNYLNDDKNVSVHVTPVEGLCMAGGGMMAQWVIVPAGSALPVAFSVVPTASTNVPLKLVAKGTLDSSDSVSKILQIEKEGAIHREEIVYNLDPLNNLGQMLEIPGSSDPNIVPEGDFSTFVKVTASEPLETLGSEEALSPGGVASLLRLPGCAEQTMIYLAPTLTASNYLDRTKQWSKLSPETKDHAVHLIQKGHVRIQQFRKKDGSFGAWLHRDSSTWLTAFVLKILSLAQEQVGNSPEKLQETASWLLAQQLGDGSFHDPCPVIHRAMQGGLVGSNETVALTAFVVIALHHGLNVFREGHAKQLKNRVEASITKANSFLGQKASAGLLGAHAAAITAYALTLTKASEDLRNVAHNSLMAMAEETGENLYWGLVLGSQDKVVLRPADPRSPTEPVPQAPALWIETTAYALLHLLLREGKGKMADKAASWLTHQGNFHGAFRSTQDTVVTLDALSAYWIASHTTEEKALKVTLSSMGRNGLKTHVLHLNNHQVKGLEEELKFSLGSTISVKVEGNSKGTLKILRTYNVLDMKNTTCQDLQIEVKVTDAVEYAWSAYEDYEDDYNMPATDDPSVPLQPVTPLQLFEGRRSRRRREAPKVAEERESRVHYTVCIWRNGKLGLSGMAIADITLLSGFHALRADLEKLTSLSDRYVSHFETDGPHVLLYFDSVPTTRECVGFGASQEVVVGLVQPASAVLYDYYSPDHKCSVFYAAPTKSQLLATLCSGDVCQCAEGKCPRLLRSLERRVEDKDGYRMRFACYYHQVEYGFTVKVLREDGRAAFRFFESKITQVLHFRTDTMASIGQTRNFLSRTSCRLRLEPNKEYLIMGMDGETSDNKGDPQYLLDSNTWIEEMPSEQMCKSTRHRAACFQLKDFLMEFSSRGCQV.

An N-terminal signal peptide occupies residues 1–19; the sequence is MRLLWGLAWVFSFCASSLQ. An intrachain disulfide couples Cys-66 to Cys-95. The N-linked (GlcNAc...) asparagine glycan is linked to Asn-224. A disulfide bond links Cys-633 and Cys-667. Positions 674-677 are excised as a propeptide; the sequence is RQKR. 3 disulfides stabilise this stretch: Cys-700–Cys-726, Cys-701–Cys-733, and Cys-714–Cys-734. One can recognise an Anaphylatoxin-like domain in the interval 700 to 734; that stretch reads CCQDGMTKLPMKRTCEQRAARVPQQACREPFLSCC. Residues Asn-743 and Asn-859 are each glycosylated (N-linked (GlcNAc...) asparagine). The isoglutamyl cysteine thioester (Cys-Gln) cross-link spans 1002–1005; the sequence is CAEQ. Residues Asn-1128 and Asn-1383 are each glycosylated (N-linked (GlcNAc...) asparagine). The residue at position 1409 (Tyr-1409) is a Sulfotyrosine. Residues 1437–1443 constitute a propeptide that is removed on maturation; sequence RRSRRRR. Cystine bridges form between Cys-1461-Cys-1525, Cys-1573-Cys-1578, Cys-1585-Cys-1663, Cys-1608-Cys-1732, and Cys-1708-Cys-1717. Positions 1585 to 1732 constitute an NTR domain; sequence CPRLLRSLER…FLMEFSSRGC (148 aa).

As to quaternary structure, in absence of complement activation, circulates in blood as a disulfide-linked trimer of an alpha, beta and gamma chain. Complement C4b is composed of Complement C4b-A, Complement C4 beta and Complement C4 gamma chains that are associated via disulfide bonds. Non-enzymatic component of the C3 convertase, also named C4bC2b, composed of the serine protease complement C2b (C2), as well as complement C4b. Non-enzymatic component of the C5 convertase, also named C4bC2bC3b, composed of the serine protease complement C2b (C2), complement C3b, as well as complement C4b. Post-translationally, prior to secretion, the single-chain precursor is enzymatically cleaved by plasminogen (PLG) to yield non-identical chains alpha, beta and gamma. During activation of the complement systems, the alpha chain is cleaved into C4a and C4b by different proteases depending on the complement pathway: C4b stays linked to the beta and gamma chains, while C4a is released in the plasma. The alpha chain is cleaved by C1S to generate C4a and C4b following activation by the classical complement system. The alpha chain is cleaved to generate C4a and C4b by MASP2 following activation by the lectin complement system. The alpha chain is cleaved by GZMK to generate C4a and C4b following activation by the GZMK complement system. Further degradation of C4b by C1 into the inactive fragments C4c and C4d blocks the generation of C3 convertase. The proteolytic cleavages often are incomplete so that many structural forms can be found in plasma. In terms of processing, upon activation, the internal thioester bond reacts with carbohydrate antigens on the target surface to form amide or ester bonds, leading to covalent association with the surface of pathogens. Complement C4b interacts with complement C3b via a thioester linkage. Post-translationally, N- and O-glycosylated. O-glycosylated with a core 1 or possibly core 8 glycan.

It localises to the secreted. The protein resides in the synapse. It is found in the cell projection. Its subcellular location is the axon. The protein localises to the dendrite. It localises to the cell surface. Specifically inhibited by nanobody hC4Nb8, inhibiting the classical complement pathway. In terms of biological role, precursor of non-enzymatic components of the classical, lectin and GZMK complement pathways, which consist in a cascade of proteins that leads to phagocytosis and breakdown of pathogens and signaling that strengthens the adaptive immune system. Functionally, non-enzymatic component of C3 and C5 convertases. Generated following cleavage by complement proteases (C1S, MASP2 or GZMK, depending on the complement pathway), it covalently attaches to the surface of pathogens, where it acts as an opsonin that marks the surface of antigens for removal. It then recruits the serine protease complement C2b to form the C3 and C5 convertases, which cleave and activate C3 and C5, respectively, the next components of the complement pathways. Complement C4b-A isotype is responsible for effective binding to form amide bonds with immune aggregates or protein antigens, while complement C4b-B isotype catalyzes the transacylation of the thioester carbonyl group to form ester bonds with carbohydrate antigens. Its function is as follows. Putative humoral mediator released following cleavage by complement proteases (C1S, MASP2 or GZMK, depending on the complement pathway). While it is strongly similar to anaphylatoxins, its role is unclear. Was reported to act as a mediator of local inflammatory process; however these effects were probably due to contamination with C3a and/C5a anaphylatoxins in biological assays. This Mus musculus (Mouse) protein is Complement C4-A.